We begin with the raw amino-acid sequence, 842 residues long: Ionotropic receptor 21a (842 aa).

The signal sequence occupies residues Met-1 to Ala-15. Asn-325 is a glycosylation site (N-linked (GlcNAc...) asparagine). The next 2 membrane-spanning stretches (helical) occupy residues Trp-405 to Thr-425 and Trp-437 to Phe-457. An N-linked (GlcNAc...) asparagine glycan is attached at Asn-469. The chain crosses the membrane as a helical span at residues Trp-479–Leu-499. N-linked (GlcNAc...) asparagine glycosylation is found at Asn-533, Asn-558, Asn-583, and Asn-588. Residues Met-680–Val-700 traverse the membrane as a helical segment. Residues Trp-722–Ala-745 are disordered. N-linked (GlcNAc...) asparagine glycosylation is found at Asn-765 and Asn-797.

Belongs to the glutamate-gated ion channel (TC 1.A.10.1) family. Expressed in the dorsal organ cool cells. In the antenna, expressed in approximately six neurons in the arista as well as five to ten neurons near the third chamber of the sacculus.

The protein localises to the cell membrane. Its function is as follows. Integral part of a neural sensory system in the antenna that provides the neural basis for the response to environmental changes in temperature (thermosensation). Together with Ir25a and Ir93a, mediates the response of the dorsal organ cool cells, a trio of cool-responsive neurons, to cooling and is required for cool avoidance behavior. The polypeptide is Ionotropic receptor 21a (Drosophila melanogaster (Fruit fly)).